Here is a 396-residue protein sequence, read N- to C-terminus: 1-deoxy-D-xylulose 5-phosphate reductoisomerase (396 aa).

NADPH is bound by residues Thr17, Gly18, Ser19, Ile20, Asn47, and Asn130. Lys131 contacts 1-deoxy-D-xylulose 5-phosphate. Glu132 provides a ligand contact to NADPH. Mn(2+) is bound at residue Asp156. 1-deoxy-D-xylulose 5-phosphate contacts are provided by Ser157, Glu158, Ser182, and His205. Glu158 is a binding site for Mn(2+). Residue Gly211 participates in NADPH binding. Residues Ser218, Asn223, Lys224, and Glu227 each coordinate 1-deoxy-D-xylulose 5-phosphate. Glu227 contacts Mn(2+).

The protein belongs to the DXR family. The cofactor is Mg(2+). Requires Mn(2+) as cofactor.

It carries out the reaction 2-C-methyl-D-erythritol 4-phosphate + NADP(+) = 1-deoxy-D-xylulose 5-phosphate + NADPH + H(+). It participates in isoprenoid biosynthesis; isopentenyl diphosphate biosynthesis via DXP pathway; isopentenyl diphosphate from 1-deoxy-D-xylulose 5-phosphate: step 1/6. Catalyzes the NADPH-dependent rearrangement and reduction of 1-deoxy-D-xylulose-5-phosphate (DXP) to 2-C-methyl-D-erythritol 4-phosphate (MEP). This Rhizobium etli (strain CIAT 652) protein is 1-deoxy-D-xylulose 5-phosphate reductoisomerase.